The sequence spans 120 residues: Large ribosomal subunit protein bL20 (120 aa).

Belongs to the bacterial ribosomal protein bL20 family.

Functionally, binds directly to 23S ribosomal RNA and is necessary for the in vitro assembly process of the 50S ribosomal subunit. It is not involved in the protein synthesizing functions of that subunit. The protein is Large ribosomal subunit protein bL20 of Novosphingobium aromaticivorans (strain ATCC 700278 / DSM 12444 / CCUG 56034 / CIP 105152 / NBRC 16084 / F199).